Here is a 200-residue protein sequence, read N- to C-terminus: Large ribosomal subunit protein bL9 (200 aa).

This sequence belongs to the bacterial ribosomal protein bL9 family.

In terms of biological role, binds to the 23S rRNA. In Ruegeria pomeroyi (strain ATCC 700808 / DSM 15171 / DSS-3) (Silicibacter pomeroyi), this protein is Large ribosomal subunit protein bL9.